The chain runs to 338 residues: Holliday junction branch migration complex subunit RuvB (338 aa).

Positions 1 to 180 are large ATPase domain (RuvB-L); that stretch reads MERLLDNKFS…FGIIERLDYY (180 aa). Residues L19, R20, G61, K64, T65, T66, R170, Y180, and R217 each coordinate ATP. Position 65 (T65) interacts with Mg(2+). The small ATPAse domain (RuvB-S) stretch occupies residues 181-251; that stretch reads TVEELSQIVM…VAKSGLEMFE (71 aa). The tract at residues 254 to 338 is head domain (RuvB-H); sequence EYGLDLVDRN…FNVKESGDKR (85 aa). K309 and R314 together coordinate DNA.

It belongs to the RuvB family. In terms of assembly, homohexamer. Forms an RuvA(8)-RuvB(12)-Holliday junction (HJ) complex. HJ DNA is sandwiched between 2 RuvA tetramers; dsDNA enters through RuvA and exits via RuvB. An RuvB hexamer assembles on each DNA strand where it exits the tetramer. Each RuvB hexamer is contacted by two RuvA subunits (via domain III) on 2 adjacent RuvB subunits; this complex drives branch migration. In the full resolvosome a probable DNA-RuvA(4)-RuvB(12)-RuvC(2) complex forms which resolves the HJ.

It is found in the cytoplasm. The enzyme catalyses ATP + H2O = ADP + phosphate + H(+). The RuvA-RuvB-RuvC complex processes Holliday junction (HJ) DNA during genetic recombination and DNA repair, while the RuvA-RuvB complex plays an important role in the rescue of blocked DNA replication forks via replication fork reversal (RFR). RuvA specifically binds to HJ cruciform DNA, conferring on it an open structure. The RuvB hexamer acts as an ATP-dependent pump, pulling dsDNA into and through the RuvAB complex. RuvB forms 2 homohexamers on either side of HJ DNA bound by 1 or 2 RuvA tetramers; 4 subunits per hexamer contact DNA at a time. Coordinated motions by a converter formed by DNA-disengaged RuvB subunits stimulates ATP hydrolysis and nucleotide exchange. Immobilization of the converter enables RuvB to convert the ATP-contained energy into a lever motion, pulling 2 nucleotides of DNA out of the RuvA tetramer per ATP hydrolyzed, thus driving DNA branch migration. The RuvB motors rotate together with the DNA substrate, which together with the progressing nucleotide cycle form the mechanistic basis for DNA recombination by continuous HJ branch migration. Branch migration allows RuvC to scan DNA until it finds its consensus sequence, where it cleaves and resolves cruciform DNA. This chain is Holliday junction branch migration complex subunit RuvB, found in Caldicellulosiruptor saccharolyticus (strain ATCC 43494 / DSM 8903 / Tp8T 6331).